The chain runs to 99 residues: MSAVTLQQGDLLLNLYIQPKASRDQIVGLHGDELKVAITAPPIDGKANAHLSKYLAKTFKVPKSDIHIMKGELGRHKQIRVIDPKIIPSVITELMGQTS.

It belongs to the UPF0235 family.

This Shewanella baltica (strain OS223) protein is UPF0235 protein Sbal223_1335.